Reading from the N-terminus, the 63-residue chain is Hyphancin-3F (63 aa).

Positions 1–22 (MNFSRILFFVFACFVALASVSA) are cleaved as a signal peptide. Residues 23-26 (APEP) constitute a propeptide, removed by a dipeptidylpeptidase. Leu61 is modified (leucine amide).

Belongs to the cecropin family.

The protein resides in the secreted. Functionally, has antibacterial activity. The chain is Hyphancin-3F from Hyphantria cunea (Fall webworm moth).